A 471-amino-acid polypeptide reads, in one-letter code: Proline and serine-rich protein 2 (471 aa).

Disordered regions lie at residues 1–46 (MPGN…SFTM) and 82–247 (CDSG…GDHV). Positions 26–43 (LSRGGSLESRCSSSRSRS) are enriched in low complexity. Serine 43 is subject to Phosphoserine. At threonine 45 the chain carries Phosphothreonine. A compositionally biased stretch (low complexity) spans 90-101 (SPQSLEESPSSH). The span at 154 to 177 (LPPPDSRGPEVFPLPPSLPVPAPS) shows a compositional bias: pro residues. 3 positions are modified to phosphoserine: serine 187, serine 220, and serine 223. At arginine 263 the chain carries Asymmetric dimethylarginine; alternate. Arginine 263 is subject to Omega-N-methylarginine; alternate. Disordered stretches follow at residues 310 to 365 (DTSS…TEQP) and 383 to 437 (PSSF…RAVG). Positions 313 to 324 (SEERWQKAEEQR) are enriched in basic and acidic residues. 2 stretches are compositionally biased toward polar residues: residues 354-364 (AQQSRAVQTEQ) and 383-393 (PSSFVPTSKTI). The span at 415-427 (YEPRPDGSQDARK) shows a compositional bias: basic and acidic residues. At serine 431 the chain carries Phosphoserine. An Omega-N-methylarginine modification is found at arginine 450.

This Mus musculus (Mouse) protein is Proline and serine-rich protein 2 (Proser2).